A 416-amino-acid chain; its full sequence is Enolase (416 aa).

Residue Gln-160 participates in (2R)-2-phosphoglycerate binding. Catalysis depends on Glu-204, which acts as the Proton donor. Residues Asp-239, Glu-280, and Asp-306 each coordinate Mg(2+). Residues Lys-331, Arg-360, Ser-361, and Lys-382 each coordinate (2R)-2-phosphoglycerate. Residue Lys-331 is the Proton acceptor of the active site.

It belongs to the enolase family. Mg(2+) is required as a cofactor.

The protein resides in the cytoplasm. It is found in the secreted. The protein localises to the cell surface. The enzyme catalyses (2R)-2-phosphoglycerate = phosphoenolpyruvate + H2O. The protein operates within carbohydrate degradation; glycolysis; pyruvate from D-glyceraldehyde 3-phosphate: step 4/5. Functionally, catalyzes the reversible conversion of 2-phosphoglycerate (2-PG) into phosphoenolpyruvate (PEP). It is essential for the degradation of carbohydrates via glycolysis. In Sulfurisphaera tokodaii (strain DSM 16993 / JCM 10545 / NBRC 100140 / 7) (Sulfolobus tokodaii), this protein is Enolase.